Consider the following 415-residue polypeptide: Tyrosine--tRNA ligase (415 aa).

The 'HIGH' region signature appears at 54 to 63; it reads PTGSNIHLGH. Positions 248–252 match the 'KMSKS' region motif; the sequence is KMSKS. Position 251 (Lys251) interacts with ATP. An S4 RNA-binding domain is found at 351–415; it reads AKAFYLLSAV…GKKTFRRLTA (65 aa).

This sequence belongs to the class-I aminoacyl-tRNA synthetase family. TyrS type 2 subfamily. In terms of assembly, homodimer.

The protein localises to the cytoplasm. The catalysed reaction is tRNA(Tyr) + L-tyrosine + ATP = L-tyrosyl-tRNA(Tyr) + AMP + diphosphate + H(+). In terms of biological role, catalyzes the attachment of tyrosine to tRNA(Tyr) in a two-step reaction: tyrosine is first activated by ATP to form Tyr-AMP and then transferred to the acceptor end of tRNA(Tyr). In Parasynechococcus marenigrum (strain WH8102), this protein is Tyrosine--tRNA ligase.